We begin with the raw amino-acid sequence, 349 residues long: Isopentenyl-diphosphate delta-isomerase (349 aa).

Residue 9-10 (RK) participates in substrate binding. FMN-binding positions include 65 to 67 (AMT), Ser95, and Asn124. 95–97 (STH) serves as a coordination point for substrate. Residue Gln154 coordinates substrate. Residue Glu155 coordinates Mg(2+). Residues Lys186, Ser211, Thr216, 262–264 (GLR), and 283–284 (SR) each bind FMN.

This sequence belongs to the IPP isomerase type 2 family. Homooctamer. Dimer of tetramers. FMN serves as cofactor. NADPH is required as a cofactor. The cofactor is Mg(2+).

The protein resides in the cytoplasm. The catalysed reaction is isopentenyl diphosphate = dimethylallyl diphosphate. Its function is as follows. Involved in the biosynthesis of isoprenoids. Catalyzes the 1,3-allylic rearrangement of the homoallylic substrate isopentenyl (IPP) to its allylic isomer, dimethylallyl diphosphate (DMAPP). The polypeptide is Isopentenyl-diphosphate delta-isomerase (Staphylococcus aureus (strain JH1)).